Consider the following 144-residue polypeptide: Large ribosomal subunit protein uL15 (144 aa).

Residues 20 to 49 (GRGIGSGLGKTGGRGHKGQKSRSGGFHKVG) are disordered. Residues 21 to 31 (RGIGSGLGKTG) are compositionally biased toward gly residues.

It belongs to the universal ribosomal protein uL15 family. As to quaternary structure, part of the 50S ribosomal subunit.

In terms of biological role, binds to the 23S rRNA. This chain is Large ribosomal subunit protein uL15, found in Neisseria meningitidis serogroup C (strain 053442).